The primary structure comprises 595 residues: Arginine--tRNA ligase (595 aa).

Residues 132–142 carry the 'HIGH' region motif; sequence ANPTGPLHVGH.

This sequence belongs to the class-I aminoacyl-tRNA synthetase family. Monomer.

It is found in the cytoplasm. It catalyses the reaction tRNA(Arg) + L-arginine + ATP = L-arginyl-tRNA(Arg) + AMP + diphosphate. The protein is Arginine--tRNA ligase of Cupriavidus necator (strain ATCC 17699 / DSM 428 / KCTC 22496 / NCIMB 10442 / H16 / Stanier 337) (Ralstonia eutropha).